A 384-amino-acid polypeptide reads, in one-letter code: tRNA 2-selenouridine synthase (384 aa).

The 124-residue stretch at 15-138 folds into the Rhodanese domain; sequence FVAGKPLIDL…MRQYLIGVIE (124 aa). Residue Cys98 is the S-selanylcysteine intermediate of the active site.

This sequence belongs to the SelU family. Monomer.

The enzyme catalyses 5-methylaminomethyl-2-thiouridine(34) in tRNA + selenophosphate + (2E)-geranyl diphosphate + H2O + H(+) = 5-methylaminomethyl-2-selenouridine(34) in tRNA + (2E)-thiogeraniol + phosphate + diphosphate. The catalysed reaction is 5-methylaminomethyl-2-thiouridine(34) in tRNA + (2E)-geranyl diphosphate = 5-methylaminomethyl-S-(2E)-geranyl-thiouridine(34) in tRNA + diphosphate. It carries out the reaction 5-methylaminomethyl-S-(2E)-geranyl-thiouridine(34) in tRNA + selenophosphate + H(+) = 5-methylaminomethyl-2-(Se-phospho)selenouridine(34) in tRNA + (2E)-thiogeraniol. It catalyses the reaction 5-methylaminomethyl-2-(Se-phospho)selenouridine(34) in tRNA + H2O = 5-methylaminomethyl-2-selenouridine(34) in tRNA + phosphate. In terms of biological role, involved in the post-transcriptional modification of the uridine at the wobble position (U34) of tRNA(Lys), tRNA(Glu) and tRNA(Gln). Catalyzes the conversion of 2-thiouridine (S2U-RNA) to 2-selenouridine (Se2U-RNA). Acts in a two-step process involving geranylation of 2-thiouridine (S2U) to S-geranyl-2-thiouridine (geS2U) and subsequent selenation of the latter derivative to 2-selenouridine (Se2U) in the tRNA chain. In Shewanella sp. (strain MR-4), this protein is tRNA 2-selenouridine synthase.